We begin with the raw amino-acid sequence, 508 residues long: Drug efflux pump JefA (508 aa).

Helical transmembrane passes span 9–29, 46–66, 75–95, 104–124, 136–156, 163–183, 194–214, 222–242, 265–285, 297–317, 328–348, 354–374, 399–419, and 479–499; these read VLATGLGIFMVFVDVNIVNVA, WAVAGYSLGMAAVLMSCALLG, FVFGVTLFVVSSIVCVLPVSL, IQGLGAAFISVLSLALLSHSF, NWMAIGMVGAASAPALGGLMV, SVFLVNVPLGAIVWLLTLVGV, LDWVGQLTLIPAVALIAYTII, QSAGFVAALLLAAGVLLWLFV, SVLIVYFVVMSCFFGTLMVIT, LHAGLMMLPVPAGFGVASLLA, LPVLTCLAAMFIGLAIFAISM, VALVGLTIFGAGAGGCATPLL, LGGIFGVAFLGTIVAAWLGAA, and GIKLALGGAAVLLTGAFVLGW.

Belongs to the major facilitator superfamily.

The protein localises to the cell inner membrane. Its function is as follows. Involved in resistance to ethambutol and isoniazid. The chain is Drug efflux pump JefA from Mycobacterium tuberculosis (strain CDC 1551 / Oshkosh).